Reading from the N-terminus, the 119-residue chain is Integration host factor subunit alpha (119 aa).

The disordered stretch occupies residues 96 to 119 (INGQQGSGKMNGEASHEQLSAEPE).

It belongs to the bacterial histone-like protein family. As to quaternary structure, heterodimer of an alpha and a beta chain.

This protein is one of the two subunits of integration host factor, a specific DNA-binding protein that functions in genetic recombination as well as in transcriptional and translational control. The polypeptide is Integration host factor subunit alpha (Bradyrhizobium sp. (strain BTAi1 / ATCC BAA-1182)).